The primary structure comprises 389 residues: Chalcone synthase 5 (389 aa).

The active site involves cysteine 164.

The protein belongs to the thiolase-like superfamily. Chalcone/stilbene synthases family.

The catalysed reaction is (E)-4-coumaroyl-CoA + 3 malonyl-CoA + 3 H(+) = 2',4,4',6'-tetrahydroxychalcone + 3 CO2 + 4 CoA. The protein operates within secondary metabolite biosynthesis; flavonoid biosynthesis. The primary product of this enzyme is 4,2',4',6'-tetrahydroxychalcone (also termed naringenin-chalcone or chalcone) which can under specific conditions spontaneously isomerize into naringenin. This is Chalcone synthase 5 (CHS5) from Trifolium subterraneum (Subterranean clover).